We begin with the raw amino-acid sequence, 26 residues long: Aldehyde dehydrogenase beta chain (26 aa).

Heterotrimer composed of an alpha, a beta and a gamma chain. FAD is required as a cofactor.

The enzyme catalyses an aldehyde + a quinone + H2O = a quinol + a carboxylate + H(+). The sequence is that of Aldehyde dehydrogenase beta chain from Amycolatopsis methanolica.